Here is a 231-residue protein sequence, read N- to C-terminus: Peroxisomal membrane protein 11E (231 aa).

Residues 1-91 (MTTLDLTRAE…LPLVLLGKSK (91 aa)) lie on the Cytoplasmic side of the membrane. A helical transmembrane segment spans residues 92–108 (NALLSTFLFLDQIVWLG). The Lumenal portion of the chain corresponds to 109–202 (RSGIYKNKER…LLQLAPKTIS (94 aa)). A helical transmembrane segment spans residues 203 to 222 (PRVTGAFGFTTSLISCYQLL). The Cytoplasmic portion of the chain corresponds to 223–231 (PSRPKLKTP).

The protein belongs to the peroxin-11 family. In terms of assembly, homooligomer. Interacts with ARC5 and FIS1B on peroxisomes. Expressed in leaves and developing siliques.

It is found in the peroxisome membrane. Functionally, involved in peroxisomal proliferation. Promotes peroxisomal duplication, aggregation or elongation without fission. The polypeptide is Peroxisomal membrane protein 11E (PEX11E) (Arabidopsis thaliana (Mouse-ear cress)).